The primary structure comprises 732 residues: Zinc/cadmium/lead-transporting P-type ATPase (732 aa).

Over 1-124 (MSTPDNHGKK…QAADEPQASR (124 aa)) the chain is Cytoplasmic. Residues 48–112 (TRYSWKVSGM…AVQKAGYSLR (65 aa)) form the HMA domain. 3 residues coordinate Zn(2+): D58, C59, and C62. Residues 125–145 (LKENLPLITLIVMMAISWGLE) traverse the membrane as a helical segment. Position 146 (Q146) is a topological domain, periplasmic. A helical membrane pass occupies residues 147–167 (FNHPFGQLAFIATTLVGLYPI). Residues 168–179 (ARQALRLIKSGS) lie on the Cytoplasmic side of the membrane. A helical membrane pass occupies residues 180-197 (YFAIETLMSVAAIGALFI). Topologically, residues 198–202 (GATAE) are periplasmic. A helical membrane pass occupies residues 203-222 (AAMVLLLFLIGERLEGWAAS). The Cytoplasmic segment spans residues 223–356 (RARQGVSALM…IDRFSRIYTP (134 aa)). Residues 357–377 (AIMAVALLVTLVPPLLFAASW) form a helical membrane-spanning segment. Residues 378 to 383 (QEWIYK) are Periplasmic-facing. The chain crosses the membrane as a helical span at residues 384 to 404 (GLTLLLIGCPCALVISTPAAI). Residues C392 and C394 each contribute to the Zn(2+) site. Residues 405 to 685 (TSGLAAAARR…RATHANIRQN (281 aa)) lie on the Cytoplasmic side of the membrane. Residue D436 is the 4-aspartylphosphate intermediate of the active site. The Mg(2+) site is built by D436, T438, and D628. A helical transmembrane segment spans residues 686–702 (ITIALGLKGIFLVTTLL). Residues 703-707 (GMTGL) are Periplasmic-facing. The helical transmembrane segment at 708-729 (WLAVLADTGATVLVTANALRLL) threads the bilayer. Position 714 (D714) interacts with Zn(2+). The Cytoplasmic portion of the chain corresponds to 730 to 732 (RRR).

Belongs to the cation transport ATPase (P-type) (TC 3.A.3) family. Type IB subfamily.

The protein localises to the cell inner membrane. The catalysed reaction is Pb(2+)(in) + ATP + H2O = Pb(2+)(out) + ADP + phosphate + H(+). It catalyses the reaction Zn(2+)(in) + ATP + H2O = Zn(2+)(out) + ADP + phosphate + H(+). The enzyme catalyses Cd(2+)(in) + ATP + H2O = Cd(2+)(out) + ADP + phosphate + H(+). Functionally, confers resistance to zinc, cadmium and lead. Couples the hydrolysis of ATP with the export of zinc, cadmium or lead. The sequence is that of Zinc/cadmium/lead-transporting P-type ATPase from Shigella sonnei (strain Ss046).